A 148-amino-acid chain; its full sequence is Snaclec 8 (148 aa).

The first 23 residues, 1–23 (MGRFIFVSFSLLVVFFSLSGTEA), serve as a signal peptide directing secretion. Positions 34-148 (YDQNCYKAFE…DTQFRLQEPG (115 aa)) constitute a C-type lectin domain.

This sequence belongs to the snaclec family. As to quaternary structure, heterodimer; disulfide-linked. In terms of processing, contains disulfide bonds. As to expression, expressed by the venom gland.

Its subcellular location is the secreted. Its function is as follows. Interferes with one step of hemostasis (modulation of platelet aggregation, or coagulation cascade, for example). This chain is Snaclec 8, found in Echis carinatus sochureki (Saw-scaled viper).